The chain runs to 330 residues: Inositol 2-dehydrogenase (330 aa).

This sequence belongs to the Gfo/Idh/MocA family.

It carries out the reaction myo-inositol + NAD(+) = scyllo-inosose + NADH + H(+). Its pathway is polyol metabolism; myo-inositol degradation into acetyl-CoA; acetyl-CoA from myo-inositol: step 1/7. Its function is as follows. Involved in the oxidation of myo-inositol (MI) to 2-keto-myo-inositol (2KMI or 2-inosose). In Rhizobium meliloti (strain 1021) (Ensifer meliloti), this protein is Inositol 2-dehydrogenase (idhA).